A 346-amino-acid polypeptide reads, in one-letter code: Ribosomal RNA small subunit methyltransferase H (346 aa).

Residues glycine 46–tyrosine 48, aspartate 63, phenylalanine 90, aspartate 113, and glutamine 120 contribute to the S-adenosyl-L-methionine site. Residues glycine 270–serine 346 are disordered.

This sequence belongs to the methyltransferase superfamily. RsmH family.

Its subcellular location is the cytoplasm. It catalyses the reaction cytidine(1402) in 16S rRNA + S-adenosyl-L-methionine = N(4)-methylcytidine(1402) in 16S rRNA + S-adenosyl-L-homocysteine + H(+). Specifically methylates the N4 position of cytidine in position 1402 (C1402) of 16S rRNA. The sequence is that of Ribosomal RNA small subunit methyltransferase H from Brucella abortus (strain S19).